The chain runs to 463 residues: 23S rRNA (uracil(1939)-C(5))-methyltransferase RlmD (463 aa).

The region spanning 6–76 (KSRKPQQPEY…KRLEEAEMVE (71 aa)) is the TRAM domain. C90, C96, C99, and C178 together coordinate [4Fe-4S] cluster. Residues Q288, F317, N322, E341, D368, and D389 each coordinate S-adenosyl-L-methionine. The active-site Nucleophile is the C415.

Belongs to the class I-like SAM-binding methyltransferase superfamily. RNA M5U methyltransferase family. RlmD subfamily.

The enzyme catalyses uridine(1939) in 23S rRNA + S-adenosyl-L-methionine = 5-methyluridine(1939) in 23S rRNA + S-adenosyl-L-homocysteine + H(+). In terms of biological role, catalyzes the formation of 5-methyl-uridine at position 1939 (m5U1939) in 23S rRNA. The polypeptide is 23S rRNA (uracil(1939)-C(5))-methyltransferase RlmD (Acinetobacter baumannii (strain AYE)).